The primary structure comprises 255 residues: Triosephosphate isomerase (255 aa).

9 to 11 (NWK) serves as a coordination point for substrate. His-95 serves as the catalytic Electrophile. The active-site Proton acceptor is the Glu-167. Residues Gly-173, Ser-212, and 233-234 (GG) contribute to the substrate site.

It belongs to the triosephosphate isomerase family. As to quaternary structure, homodimer.

The protein resides in the cytoplasm. It carries out the reaction D-glyceraldehyde 3-phosphate = dihydroxyacetone phosphate. The protein operates within carbohydrate biosynthesis; gluconeogenesis. Its pathway is carbohydrate degradation; glycolysis; D-glyceraldehyde 3-phosphate from glycerone phosphate: step 1/1. Functionally, involved in the gluconeogenesis. Catalyzes stereospecifically the conversion of dihydroxyacetone phosphate (DHAP) to D-glyceraldehyde-3-phosphate (G3P). In Sodalis glossinidius (strain morsitans), this protein is Triosephosphate isomerase.